Reading from the N-terminus, the 712-residue chain is Protein TAPT1 homolog (712 aa).

The segment covering 1-21 (MNNVPSTSRENSRNPSESSSS) has biased composition (low complexity). 2 disordered regions span residues 1 to 22 (MNNV…SSSI) and 44 to 66 (ITMS…EIET). A run of 7 helical transmembrane segments spans residues 196–216 (FFYL…GALL), 222–242 (TSAE…SMLI), 305–325 (TCGH…LVIL), 379–399 (HIFA…NWNI), 402–422 (FTEM…VDWL), 470–490 (GFIP…TFTL), and 497–517 (IIFG…GVVM). Basic and acidic residues predominate over residues 596–619 (EIRRSTDRETAVSHLTARSDERTP). A disordered region spans residues 596 to 712 (EIRRSTDRET…MPEQGVQRIE (117 aa)). A compositionally biased stretch (polar residues) spans 656-667 (TENNTNSNSEQA). The span at 675–692 (TAAPVTSSASTNTNATSS) shows a compositional bias: low complexity.

Belongs to the TAPT1 family.

The protein localises to the membrane. This Caenorhabditis elegans protein is Protein TAPT1 homolog.